Reading from the N-terminus, the 807-residue chain is DNA gyrase subunit B (807 aa).

The 115-residue stretch at 429 to 543 folds into the Toprim domain; sequence SELFIVEGDS…KGYLYIAQPP (115 aa). Mg(2+) contacts are provided by Glu435, Asp508, and Asp510.

Belongs to the type II topoisomerase GyrB family. In terms of assembly, heterotetramer, composed of two GyrA and two GyrB chains. In the heterotetramer, GyrA contains the active site tyrosine that forms a transient covalent intermediate with DNA, while GyrB binds cofactors and catalyzes ATP hydrolysis. It depends on Mg(2+) as a cofactor. Mn(2+) serves as cofactor. The cofactor is Ca(2+).

Its subcellular location is the cytoplasm. It catalyses the reaction ATP-dependent breakage, passage and rejoining of double-stranded DNA.. Functionally, a type II topoisomerase that negatively supercoils closed circular double-stranded (ds) DNA in an ATP-dependent manner to modulate DNA topology and maintain chromosomes in an underwound state. Negative supercoiling favors strand separation, and DNA replication, transcription, recombination and repair, all of which involve strand separation. Also able to catalyze the interconversion of other topological isomers of dsDNA rings, including catenanes and knotted rings. Type II topoisomerases break and join 2 DNA strands simultaneously in an ATP-dependent manner. The protein is DNA gyrase subunit B of Rickettsia conorii (strain ATCC VR-613 / Malish 7).